A 544-amino-acid chain; its full sequence is MYEFKFADIGEGIHEGTVLQWNFKVGDKVKEGETLVIVETDKVNAELPSPVDGTIVSLGAKEGEEIHVGQIIVTIDDGTGTPAAAPAPAQVSAPTPAPAAAPQVAAPAASGDIYDFKFADIGEGIHEGTILQWNFKVGDKVKEGETLVVVETDKVNAELPSPVDGTILKLGKAEGEVIHVGETVVLIGQNGATLEQAQAPKAEAPVSEPKKGAGVVGEIEVSDDIIGGSEEVHVVATTGKVLASPVARKLASDLGVDIATIKGSGEQGRVMKDDVQNSKAPAEAQAPVQQTQAPAQAAASVAPSFAAAGKPQGDVEVVKITRLRKAVSNAMTRSKSIIPETVLMDEINVDALVNFRNEAKGLAESKGIKLTYMAFIAKAVLIALKEFPMFNASFNHDTDEVYIKKFINLGMAVDTPDGLIVPNIKNADRLSVFELASQVRSLADDTIARKISMDQQTGGTFTITNFGSAGIAFGTPVINYPELAILGIGKIDRKPWVVGNEIKIAHTLPLSLAVDHRIIDGADGGRFLMRVKELLTNPTLLLLS.

Lipoyl-binding domains follow at residues 1–76 (MYEF…VTID) and 113–188 (IYDF…VLIG). 2 positions are modified to N6-lipoyllysine: Lys42 and Lys154. Residues 242-279 (LASPVARKLASDLGVDIATIKGSGEQGRVMKDDVQNSK) enclose the Peripheral subunit-binding (PSBD) domain. His516 is a catalytic residue.

Belongs to the 2-oxoacid dehydrogenase family. As to quaternary structure, forms a 24-polypeptide structural core with octahedral symmetry. Requires (R)-lipoate as cofactor.

It catalyses the reaction N(6)-[(R)-dihydrolipoyl]-L-lysyl-[protein] + acetyl-CoA = N(6)-[(R)-S(8)-acetyldihydrolipoyl]-L-lysyl-[protein] + CoA. Functionally, the pyruvate dehydrogenase complex catalyzes the overall conversion of pyruvate to acetyl-CoA and CO(2). It contains multiple copies of three enzymatic components: pyruvate dehydrogenase (E1), dihydrolipoamide acetyltransferase (E2) and lipoamide dehydrogenase (E3). In Acholeplasma laidlawii, this protein is Dihydrolipoyllysine-residue acetyltransferase component of pyruvate dehydrogenase complex (pdhC).